We begin with the raw amino-acid sequence, 72 residues long: Crustacean hyperglycemic hormone B (72 aa).

A Pyrrolidone carboxylic acid modification is found at Q1. F3 is subject to D-phenylalanine; in form CHHB-II. 3 disulfide bridges follow: C7–C43, C23–C39, and C26–C52. V72 carries the valine amide modification.

In terms of processing, stereoinversion of L-Phe (in CHHB-I) to D-Phe (in CHHB-II).

The protein resides in the secreted. Its function is as follows. Hormone found in the sinus gland of isopods and decapods which controls the blood sugar level. Has a secretagogue action over the amylase released from the midgut gland. May act as a stress hormone and may be involved in the control of molting and reproduction. The chain is Crustacean hyperglycemic hormone B from Cherax destructor (Common yabby crayfish).